The chain runs to 245 residues: MHNFYNYSPALGKTYVYENKYYKNLGTVIKQAKRQKHLEQHEIEERSLDHLDRYLVAEDPFYGPGKNQKLTLFKEIRNVKPDTMKLVVNWSGKEFLRETWTRFMEDSFPIVNDQEVMDIYLTINVRPTRPNRCYKFVAQHALRCDEGYVPHEVIRIVEPSTVENNEYRISLAKRGGGCPIRNLHSAYTTSFEHFLNSVIWDNFYKPIVYVGTTSAEEEEILLEVSLVFKIKEFAPDAPLFQGPAY.

It belongs to the polyhedrin family.

In terms of biological role, major component of the virus occlusion bodies, which are large proteinaceous structures (polyhedra), that protect the virus from the outside environment for extended periods until they are ingested by insect larvae. In Lepidoptera (butterflies and moths), this protein is Polyhedrin (PH).